A 457-amino-acid chain; its full sequence is Proton extrusion protein PxcA (457 aa).

A run of 4 helical transmembrane segments spans residues 239–259, 332–352, 368–390, and 417–437; these read FILL…TFFL, INAI…GVVI, GILY…DMFV, and FNFL…KYWI.

This sequence belongs to the CemA family.

Its subcellular location is the cell inner membrane. Required for H(+) efflux immediately after light irradiation to form a rapid H(+) concentration gradient across the thylakoid membranes. Together with PxcL, contributes to transient H(+) uptake following dark to light transition. The chain is Proton extrusion protein PxcA from Gloeothece citriformis (strain PCC 7424) (Cyanothece sp. (strain PCC 7424)).